Consider the following 169-residue polypeptide: Photosystem I assembly protein Ycf3 (169 aa).

3 TPR repeats span residues Ala35–Pro68, Ser72–Leu105, and Gly120–Asn153.

The protein belongs to the Ycf3 family.

Its subcellular location is the plastid. It is found in the chloroplast thylakoid membrane. In terms of biological role, essential for the assembly of the photosystem I (PSI) complex. May act as a chaperone-like factor to guide the assembly of the PSI subunits. The chain is Photosystem I assembly protein Ycf3 from Chaetosphaeridium globosum (Charophycean green alga).